Here is a 207-residue protein sequence, read N- to C-terminus: Large ribosomal subunit protein uL4 (207 aa).

Positions 43-52 (NKRQGTQSAK) are enriched in polar residues. Positions 43-72 (NKRQGTQSAKTRAEVRGGGRKPWKQKGTGR) are disordered. The span at 60-71 (GGRKPWKQKGTG) shows a compositional bias: basic residues.

Belongs to the universal ribosomal protein uL4 family. Part of the 50S ribosomal subunit.

One of the primary rRNA binding proteins, this protein initially binds near the 5'-end of the 23S rRNA. It is important during the early stages of 50S assembly. It makes multiple contacts with different domains of the 23S rRNA in the assembled 50S subunit and ribosome. Functionally, forms part of the polypeptide exit tunnel. This Alkaliphilus metalliredigens (strain QYMF) protein is Large ribosomal subunit protein uL4.